Here is a 409-residue protein sequence, read N- to C-terminus: 5-aminolevulinate synthase (409 aa).

Arginine 21, serine 137, and lysine 156 together coordinate succinyl-CoA. 3 residues coordinate pyridoxal 5'-phosphate: serine 189, histidine 217, and threonine 245. Lysine 248 is an active-site residue. Lysine 248 is subject to N6-(pyridoxal phosphate)lysine. Pyridoxal 5'-phosphate contacts are provided by serine 277 and threonine 278. Threonine 365 provides a ligand contact to succinyl-CoA.

It belongs to the class-II pyridoxal-phosphate-dependent aminotransferase family. Homodimer. Pyridoxal 5'-phosphate serves as cofactor.

The catalysed reaction is succinyl-CoA + glycine + H(+) = 5-aminolevulinate + CO2 + CoA. Its pathway is porphyrin-containing compound metabolism; protoporphyrin-IX biosynthesis; 5-aminolevulinate from glycine: step 1/1. The chain is 5-aminolevulinate synthase (hemA) from Rhodobacter capsulatus (strain ATCC BAA-309 / NBRC 16581 / SB1003).